The following is a 944-amino-acid chain: MLDDYYTWTYPDIPENVAQELLQLNGSLVVVGIVGRSDCDQANKMVAFGMEPPSEHTPKDGQMQCYYKPGTSILLLHFESTYDAEIAGQMIDVCIEDVDTPFDIDSFFEGIRCRFVRMMLLALHVCHIVVYVETGQTFDPTLITVFQLAKFAREQHLMQFLPQMLRETPAARMSERTRLCTPRILFLFENFPSDEPKTRECVSTYEFQMEDCIYELLRHHNIVTNSSSNSLVALPNNKQFVFFNAHEELREDTLMKAVECLNETMYKPDLKEEEEDLEILALAPFDGFVKPFALPVDEKEWDNQQYKKDHTVWNFLERHVQDALMGCFEAGSFKQHAQQGTFQLLNSKEWHDCMATMHTLLVENTKDPNLETSNEEYKNFLKNFDESLNYEKKFWAHLCELGLKKGIAAYKNAAPENYGSATHRQLLAEATLAFEEEGRGPQAQAALAKLASICHKHWQDGRQQCEQLSLRSHPCTLPKKVPHEKHNSGVIHISSCNCGRTQGRREDPFNLRQANYEFYEHIAQMCNLCVKVKQYQFPIFEPSVSDYRAAAFEAAFPLLNNGKSGAPQDEDAEEDEAEEEEGQEQEQPTEEQLQNTASNCCSQPLSPTFGSDLNMSIAGFGASLKESQASSEQLLNSEQNTTSSGTSSADTDNELVVELQEPAKKEAREDAGPAHAVSTSTTEYLPGLVHTVSNFGLLPLFPSWSLACVGPSSIYSHNTGLQEHFQSGFLSGANFLLPWDVQLRLVHAPKQQYQQQHHGKKQQRWKKQGDRLSLKIFVGMEYECSRGHRFMMCAPDRVLRGGADIERETCSMVVHNNMPLYYPCPCRSQNNFLAQLMRIHVVTPKAPVNIIVDPKVCVGRYTFTMGSIVPPRLSQSAYWIIRLPYVYQGDDVLIAPPEQLDPGYPLTGGYLLPGMFGVVETDPTLDLNEPDKMGASAAGNFTRI.

2 disordered regions span residues 559-601 and 629-654; these read LNNG…SNCC and ASSE…TDNE. Positions 568-589 are enriched in acidic residues; it reads QDEDAEEDEAEEEEGQEQEQPT. A compositionally biased stretch (polar residues) spans 629–640; the sequence is ASSEQLLNSEQN. The segment covering 641–650 has biased composition (low complexity); the sequence is TTSSGTSSAD.

The protein belongs to the SMG8 family.

Its function is as follows. Involved in nonsense-mediated decay (NMD) of mRNAs containing premature stop codons. Probable component of kinase complex containing nonC and recruited to stalled ribosomes. This chain is Nonsense-mediated mRNA decay factor SMG8, found in Drosophila melanogaster (Fruit fly).